A 174-amino-acid polypeptide reads, in one-letter code: DNA-directed RNA polymerase IV subunit 7 (174 aa).

It belongs to the eukaryotic RPB7/RPC8 RNA polymerase subunit family. In terms of assembly, component of the RNA polymerase IV complex. Interacts with NRPD1.

It localises to the nucleus. In terms of biological role, DNA-dependent RNA polymerase catalyzes the transcription of DNA into RNA using the four ribonucleoside triphosphates as substrates. Component of RNA polymerase IV which mediates 24-nt short-interfering RNAs (siRNA) accumulation. Implicated in siRNA-directed heterochromatin formation through the action of DCL3 and AGO4, and subsequent DNA methylation-dependent silencing of targeted sequences. Essential component of a self-reinforcing loop coupling de novo DNA methylation to siRNA production. Required for intercellular but not intracellular RNA interference (RNAi) leading to systemic post-transcriptional gene silencing. Involved in the maintenance of post-transcriptional RNA silencing. This is DNA-directed RNA polymerase IV subunit 7 (NRPD7) from Arabidopsis thaliana (Mouse-ear cress).